We begin with the raw amino-acid sequence, 385 residues long: UDP-N-acetylglucosamine--N-acetylmuramyl-(pentapeptide) pyrophosphoryl-undecaprenol N-acetylglucosamine transferase (385 aa).

Residues 11–13 (TGG), N117, R160, S215, and Q317 each bind UDP-N-acetyl-alpha-D-glucosamine.

The protein belongs to the glycosyltransferase 28 family. MurG subfamily.

The protein localises to the cell inner membrane. The enzyme catalyses di-trans,octa-cis-undecaprenyl diphospho-N-acetyl-alpha-D-muramoyl-L-alanyl-D-glutamyl-meso-2,6-diaminopimeloyl-D-alanyl-D-alanine + UDP-N-acetyl-alpha-D-glucosamine = di-trans,octa-cis-undecaprenyl diphospho-[N-acetyl-alpha-D-glucosaminyl-(1-&gt;4)]-N-acetyl-alpha-D-muramoyl-L-alanyl-D-glutamyl-meso-2,6-diaminopimeloyl-D-alanyl-D-alanine + UDP + H(+). It participates in cell wall biogenesis; peptidoglycan biosynthesis. Functionally, cell wall formation. Catalyzes the transfer of a GlcNAc subunit on undecaprenyl-pyrophosphoryl-MurNAc-pentapeptide (lipid intermediate I) to form undecaprenyl-pyrophosphoryl-MurNAc-(pentapeptide)GlcNAc (lipid intermediate II). This Rickettsia prowazekii (strain Madrid E) protein is UDP-N-acetylglucosamine--N-acetylmuramyl-(pentapeptide) pyrophosphoryl-undecaprenol N-acetylglucosamine transferase.